Here is a 433-residue protein sequence, read N- to C-terminus: Serine/threonine-protein kinase Sgk1 (433 aa).

Residues 66-92 form a disordered region; it reads QDVELMNSNPSPPPSPSQQINLGPSSN. The span at 83 to 92 shows a compositional bias: polar residues; the sequence is QQINLGPSSN. The Protein kinase domain occupies 100–357; sequence FDFLKVIGKG…FTEIKNHMFF (258 aa). Residues 106-114 and K129 contribute to the ATP site; that span reads IGKGSFGKV. The active-site Proton acceptor is the D224. The AGC-kinase C-terminal domain occupies 358 to 433; that stretch reads SPINWDDLNA…SYAPAMDSYL (76 aa).

Belongs to the protein kinase superfamily. AGC Ser/Thr protein kinase family.

The protein localises to the cytoplasm. It localises to the nucleus. It is found in the endoplasmic reticulum. The catalysed reaction is L-seryl-[protein] + ATP = O-phospho-L-seryl-[protein] + ADP + H(+). It catalyses the reaction L-threonyl-[protein] + ATP = O-phospho-L-threonyl-[protein] + ADP + H(+). Functionally, protein kinase that may play an important role in cellular stress response. May be involved in the regulation of processes such as cell survival, neuronal excitability and renal sodium excretion. This Danio rerio (Zebrafish) protein is Serine/threonine-protein kinase Sgk1 (sgk1).